Here is a 207-residue protein sequence, read N- to C-terminus: Small ribosomal subunit protein uS10m (207 aa).

The N-terminal 24 residues, 1-24, are a transit peptide targeting the mitochondrion; the sequence is MLSVFGLRTVARCNSTLASGGARA.

It belongs to the universal ribosomal protein uS10 family. Part of the mitochondrial small ribosomal subunit.

It is found in the mitochondrion. Involved in mitochondrial genome encoded proteins translation. Involved in the binding of tRNA to the ribosomes. This is Small ribosomal subunit protein uS10m (RSM10) from Eremothecium gossypii (strain ATCC 10895 / CBS 109.51 / FGSC 9923 / NRRL Y-1056) (Yeast).